We begin with the raw amino-acid sequence, 677 residues long: MAKKFELVSKYKPAGDQPKAIESLLDNLDAGLAHQVLLGVTGSGKTFTMANVIERSQRPTLILAHNKTLAAQLYGEMKEYFPNNAVEYFVSYYDYYQPEAYVPTTDTFIEKDASINDHIEQMRLSATKALMERRDVVLVASVSAIYGLGDPESYMKMMLHLRRGDIIDQRDVLRRLAQLQYKRNDAAFERGTYRVRGDVIDIFPAESEEIAVRLELFDSEVDRISFFEPLTGQITEKDVARATIYPKTHYVTPREVLVKAIEKIKDELKDRRDILLKQNKLIEEQRINQRTQFDIEMMLELGYCSGIENYSRYLSGRAPGEPPPTLMDYLPDNALLIIDESHVTVSQIGAMYKGDRSRKENLVEYGFRLPSALDNRPLKFDEFEAIAPQTLYVSATPGKYELERSGNEVVEQVVRPTGLIDPQIEVRPVATQVDDLMSEIRLRTEVGERVLATTLTKKMSEDLADYLDEHGIKVRYLHSDIDTVERMEIIRDLRLGKFDVLVGINLLREGLDMPEVSLVAILDADKEGFLRSDRSLIQTIGRAARNVNGRAILYADRITGSMQRAMDETDRRREKQIAYNKEHGITPQGLNKDITDVMDLGQGSAKARKSKAEKALAEVASGYDARTVVVKDAKAVMKEIDAKEKEMYKAAQNLEFEQAGKLRDEVAELREQLKRAV.

Residues 26–414 (DNLDAGLAHQ…SGNEVVEQVV (389 aa)) enclose the Helicase ATP-binding domain. Residue 39–46 (GVTGSGKT) coordinates ATP. The Beta-hairpin signature appears at 92-115 (YYDYYQPEAYVPTTDTFIEKDASI). A Helicase C-terminal domain is found at 432–598 (QVDDLMSEIR…GLNKDITDVM (167 aa)). Residues 637 to 672 (MKEIDAKEKEMYKAAQNLEFEQAGKLRDEVAELREQ) form the UVR domain.

It belongs to the UvrB family. As to quaternary structure, forms a heterotetramer with UvrA during the search for lesions. Interacts with UvrC in an incision complex.

It is found in the cytoplasm. In terms of biological role, the UvrABC repair system catalyzes the recognition and processing of DNA lesions. A damage recognition complex composed of 2 UvrA and 2 UvrB subunits scans DNA for abnormalities. Upon binding of the UvrA(2)B(2) complex to a putative damaged site, the DNA wraps around one UvrB monomer. DNA wrap is dependent on ATP binding by UvrB and probably causes local melting of the DNA helix, facilitating insertion of UvrB beta-hairpin between the DNA strands. Then UvrB probes one DNA strand for the presence of a lesion. If a lesion is found the UvrA subunits dissociate and the UvrB-DNA preincision complex is formed. This complex is subsequently bound by UvrC and the second UvrB is released. If no lesion is found, the DNA wraps around the other UvrB subunit that will check the other stand for damage. In Idiomarina loihiensis (strain ATCC BAA-735 / DSM 15497 / L2-TR), this protein is UvrABC system protein B.